The sequence spans 739 residues: Phosphoribosylformylglycinamidine synthase subunit PurL (739 aa).

The active site involves His-53. ATP contacts are provided by Tyr-56 and Lys-95. Glu-97 serves as a coordination point for Mg(2+). Substrate contacts are provided by residues 98–101 (SHNH) and Arg-120. His-99 acts as the Proton acceptor in catalysis. Mg(2+) is bound at residue Asp-121. A substrate-binding site is contributed by Gln-244. A Mg(2+)-binding site is contributed by Asp-274. 318 to 320 (ESQ) is a substrate binding site. Residues Asp-501 and Gly-538 each coordinate ATP. Asn-539 is a binding site for Mg(2+). Substrate is bound at residue Ser-541.

This sequence belongs to the FGAMS family. In terms of assembly, monomer. Part of the FGAM synthase complex composed of 1 PurL, 1 PurQ and 2 PurS subunits.

It is found in the cytoplasm. It catalyses the reaction N(2)-formyl-N(1)-(5-phospho-beta-D-ribosyl)glycinamide + L-glutamine + ATP + H2O = 2-formamido-N(1)-(5-O-phospho-beta-D-ribosyl)acetamidine + L-glutamate + ADP + phosphate + H(+). The protein operates within purine metabolism; IMP biosynthesis via de novo pathway; 5-amino-1-(5-phospho-D-ribosyl)imidazole from N(2)-formyl-N(1)-(5-phospho-D-ribosyl)glycinamide: step 1/2. Its function is as follows. Part of the phosphoribosylformylglycinamidine synthase complex involved in the purines biosynthetic pathway. Catalyzes the ATP-dependent conversion of formylglycinamide ribonucleotide (FGAR) and glutamine to yield formylglycinamidine ribonucleotide (FGAM) and glutamate. The FGAM synthase complex is composed of three subunits. PurQ produces an ammonia molecule by converting glutamine to glutamate. PurL transfers the ammonia molecule to FGAR to form FGAM in an ATP-dependent manner. PurS interacts with PurQ and PurL and is thought to assist in the transfer of the ammonia molecule from PurQ to PurL. The protein is Phosphoribosylformylglycinamidine synthase subunit PurL of Listeria monocytogenes serotype 4b (strain CLIP80459).